A 638-amino-acid polypeptide reads, in one-letter code: Chaperone protein HtpG (638 aa).

The interval 1–345 is a; substrate-binding; sequence MTTETFEFQV…AQDLSLNVSR (345 aa). The segment at 346-560 is b; it reads EILQQDRHIR…AGELTPALEN (215 aa). The segment at 561 to 638 is c; that stretch reads MYRAMGQEVP…LMADRLERTL (78 aa).

The protein belongs to the heat shock protein 90 family. In terms of assembly, homodimer.

The protein resides in the cytoplasm. Molecular chaperone. Has ATPase activity. The chain is Chaperone protein HtpG from Streptomyces coelicolor (strain ATCC BAA-471 / A3(2) / M145).